The sequence spans 277 residues: Carbonyl reductase [NADPH] 1 (277 aa).

Residue S2 is modified to N-acetylserine. Residues S2 and S30 each carry the phosphoserine modification. NADP(+) contacts are provided by residues 10-34 (VTGG…GDVV), 63-64 (DI), and N90. Residues 95–97 (FKV) and Q106 contribute to the glutathione site. S140 is a substrate binding site. 193–194 (AY) is a binding site for glutathione. Catalysis depends on Y194, which acts as the Proton acceptor. NADP(+)-binding positions include 194–198 (YGVTK) and 231–233 (VRT). K239 carries the post-translational modification N6-1-carboxyethyl lysine.

The protein belongs to the short-chain dehydrogenases/reductases (SDR) family. As to quaternary structure, monomer. Expressed in kidney (at protein level).

Its subcellular location is the cytoplasm. It carries out the reaction a secondary alcohol + NADP(+) = a ketone + NADPH + H(+). The enzyme catalyses a primary alcohol + NADP(+) = an aldehyde + NADPH + H(+). It catalyses the reaction prostaglandin F2alpha + NADP(+) = prostaglandin E2 + NADPH + H(+). The catalysed reaction is prostaglandin E1 + NADP(+) = 15-oxoprostaglandin E1 + NADPH + H(+). It carries out the reaction menadione + NADPH + H(+) = menadiol + NADP(+). The enzyme catalyses prostaglandin D2 + NADP(+) = 15-oxoprostaglandin D2 + NADPH + H(+). It catalyses the reaction prostaglandin E2 + NADP(+) = 15-oxoprostaglandin E2 + NADPH + H(+). The catalysed reaction is prostaglandin F2alpha + NADP(+) = 15-oxoprostaglandin F2alpha + NADPH + H(+). It carries out the reaction daunorubicin + NADPH + H(+) = 13-dihydrodaunorubicin + NADP(+). The enzyme catalyses S-nitrosoglutathione + NADPH + H(+) = S-(hydroxysulfenamide)glutathione + NADP(+). It catalyses the reaction cortisol + NADPH + H(+) = 20beta-dihydrocortisol + NADP(+). The catalysed reaction is corticosterone + NADPH + H(+) = 20beta-dihydrocorticosterone + NADP(+). Inhibited by quercetin, rutenin and its derivatives. Functionally, NADPH-dependent reductase with broad substrate specificity. Catalyzes the reduction of a wide variety of carbonyl compounds including quinones, prostaglandins, menadione, plus various xenobiotics. Catalyzes the reduction of the antitumor anthracyclines doxorubicin and daunorubicin to the cardiotoxic compounds doxorubicinol and daunorubicinol. Can convert prostaglandin E to prostaglandin F2-alpha. Can bind glutathione, which explains its higher affinity for glutathione-conjugated substrates. Catalyzes the reduction of S-nitrosoglutathione. In addition, participates in the glucocorticoid metabolism by catalyzing the NADPH-dependent cortisol/corticosterone into 20beta-dihydrocortisol (20b-DHF) or 20beta-corticosterone (20b-DHB), which are weak agonists of NR3C1 and NR3C2 in adipose tissue. This chain is Carbonyl reductase [NADPH] 1, found in Homo sapiens (Human).